We begin with the raw amino-acid sequence, 31 residues long: Ranatuerin-2 (31 aa).

The cysteines at positions 23 and 28 are disulfide-linked.

The protein belongs to the frog skin active peptide (FSAP) family. Ranatuerin subfamily. In terms of tissue distribution, expressed by the skin glands.

Its subcellular location is the secreted. Its function is as follows. Antibacterial activity against Gram-positive bacterium S.aureus (MIC=60 uM). Shows no detectable hemolytic activity towards human erythrocytes. This chain is Ranatuerin-2, found in Aquarana catesbeiana (American bullfrog).